Here is a 674-residue protein sequence, read N- to C-terminus: Regulator of G-protein signaling 9 (674 aa).

The region spanning 30–105 (PETGVRMQNQ…PDGSLYRFQT (76 aa)) is the DEP domain. The 62-residue stretch at 219 to 280 (KQTVVAVKKE…NPWITDDTQF (62 aa)) folds into the G protein gamma domain. In terms of domain architecture, RGS spans 298 to 413 (RWAFNFSELI…YARYLKSPIY (116 aa)). The disordered stretch occupies residues 533-573 (SSGLEQKGECSGSMAPRGPSVTESSEASLDTSWPRSRPRAP). Polar residues predominate over residues 553–565 (VTESSEASLDTSW).

As to quaternary structure, heterodimer with GNB5. Interacts with RGS7BP, leading to regulate the subcellular location of the heterodimer formed with GNB5. Component of the RGS9-1-Gbeta5 complex composed of RGS9 (RGS9-1), Gbeta5 (GNB5) and RGS9BP. Interacts with PDE6G and GNAT1. Post-translationally, retinal isoform 3 is light-dependent phosphorylated at 'Ser-478'. Phosphorylation is decreased by light exposition. Highly expressed in the caudate and putamen, lower levels found in the hypothalamus and nucleus accumbens and very low levels in cerebellum. Not expressed in globus pallidus or cingulate cortex. Isoform 2 is expressed predominantly in pineal gland and retina. Isoform 3 is expressed in retina (abundant in photoreceptors).

The protein localises to the membrane. Inhibits signal transduction by increasing the GTPase activity of G protein alpha subunits thereby driving them into their inactive GDP-bound form. Binds to GNAT1. Involved in phototransduction; key element in the recovery phase of visual transduction. In Homo sapiens (Human), this protein is Regulator of G-protein signaling 9 (RGS9).